Consider the following 537-residue polypeptide: [Pyruvate dehydrogenase [acetyl-transferring]]-phosphatase 1, mitochondrial (537 aa).

A mitochondrion-targeting transit peptide spans Met-1–Tyr-71. Residues Ile-109–Phe-525 enclose the PPM-type phosphatase domain. Residues Asp-144 and Gly-145 each contribute to the Mn(2+) site. N6-acetyllysine is present on Lys-202. The Mn(2+) site is built by Asp-418 and Asp-516.

This sequence belongs to the PP2C family. As to quaternary structure, heterodimer of a catalytic (PDP1) and a regulatory (PDPR) subunit. Requires Mn(2+) as cofactor. It depends on Mg(2+) as a cofactor.

The protein resides in the mitochondrion. The catalysed reaction is O-phospho-L-seryl-[pyruvate dehydrogenase E1 alpha subunit] + H2O = L-seryl-[pyruvate dehydrogenase E1 alpha subunit] + phosphate. With respect to regulation, magnesium-dependent and calcium-stimulated. PDP1 activity strongly depends on its Ca(2+)-dependent binding to the lipoyl domain of E2 subunit of component of the pyruvate dehydrogenase complex. Its function is as follows. Mitochondrial enzyme that catalyzes the dephosphorylation and concomitant reactivation of the alpha subunit of the E1 component of the pyruvate dehydrogenase complex (PDC), thereby stimulating the conversion of pyruvate into acetyl-CoA. In Pongo abelii (Sumatran orangutan), this protein is [Pyruvate dehydrogenase [acetyl-transferring]]-phosphatase 1, mitochondrial (PDP1).